The primary structure comprises 198 residues: MNKKKKSIVIFTGPSGVGKGTVEQLVFNYDELNLSLSCSATTRSPRGGETNGIHYYFISKEEFKDRIKNKKFLEHSFHFDNYYGTLYSELDNIIARNKVPFLEIETNGAKIIAQKMQKLKNPPYNLITIFLSPPSITDIYKRIKNRGTENAQTIKNRVNKAKEELLEAGNFKYVVYNDRPERAAQEIREILHKELDID.

The Guanylate kinase-like domain maps to 6–192 (KSIVIFTGPS…AAQEIREILH (187 aa)). 13–20 (GPSGVGKG) contacts ATP.

This sequence belongs to the guanylate kinase family.

Its subcellular location is the cytoplasm. It catalyses the reaction GMP + ATP = GDP + ADP. Its function is as follows. Essential for recycling GMP and indirectly, cGMP. This is Guanylate kinase from Mycoplasmopsis synoviae (strain 53) (Mycoplasma synoviae).